Reading from the N-terminus, the 235-residue chain is Myb family transcription factor PHL12 (235 aa).

The span at 1–12 (MMQSREEIRDDS) shows a compositional bias: basic and acidic residues. Positions 1-20 (MMQSREEIRDDSSSGLVLTT) are disordered. The region spanning 20–80 (TDPKPRLRWT…HLQKFRLGKQ (61 aa)) is the HTH myb-type domain. The H-T-H motif DNA-binding region spans 51 to 76 (PKTIMRVMGVKGLTLYHLKSHLQKFR). Residues 119–139 (RNMNEMQMEVQRRIEEEVVIE) form a coiled coil region.

It belongs to the MYB-CC family. In terms of tissue distribution, expressed in phloem and/or cambium.

It localises to the nucleus. The protein is Myb family transcription factor PHL12 of Arabidopsis thaliana (Mouse-ear cress).